The primary structure comprises 349 residues: Nuclear distribution protein nudE homolog 1 (349 aa).

The stretch at 23-189 forms a coiled coil; sequence AMKYKTCSEE…ELAVQQKQEK (167 aa). A disordered region spans residues 182-201; sequence AVQQKQEKPKSNMGSPETER.

It belongs to the nudE family. As to quaternary structure, self-associates. Interacts with pafah1b1. Phosphorylated in mitosis.

It is found in the cytoplasm. The protein localises to the cytoskeleton. Its subcellular location is the microtubule organizing center. The protein resides in the centrosome. It localises to the spindle. It is found in the chromosome. The protein localises to the centromere. Its subcellular location is the kinetochore. The protein resides in the cleavage furrow. It localises to the cytoplasmic vesicle membrane. Required for centrosome duplication and formation and function of the mitotic spindle. This chain is Nuclear distribution protein nudE homolog 1 (nde1), found in Xenopus tropicalis (Western clawed frog).